Consider the following 254-residue polypeptide: MRTPLLAGNWKMYKTTGEARELVEGLLHGLGDVSDRKVLVCPPFTALHTVRDLVQGTPIALGAQDVYIEPQGAFTGAISPVMLRDLGCTYVIVGHSERRAIFGEGDELIGKKVRAALAHDLTPILCVGETKPQRDAGEAETIVVAQVRAALAGMTPDQIARIVIAYEPVWAIGTGDTATPADAQAMHVTIRQTLGELAGSDVADAINILYGGSVKPDNIDDLMAQPDIDGALVGGASLKADSFLRIVHFLPIQG.

Substrate is bound at residue 9 to 11 (NWK). Histidine 95 (electrophile) is an active-site residue. Catalysis depends on glutamate 167, which acts as the Proton acceptor. Substrate is bound by residues glycine 173, serine 213, and 234 to 235 (GG).

Belongs to the triosephosphate isomerase family. In terms of assembly, homodimer.

It is found in the cytoplasm. It carries out the reaction D-glyceraldehyde 3-phosphate = dihydroxyacetone phosphate. Its pathway is carbohydrate biosynthesis; gluconeogenesis. It functions in the pathway carbohydrate degradation; glycolysis; D-glyceraldehyde 3-phosphate from glycerone phosphate: step 1/1. Its function is as follows. Involved in the gluconeogenesis. Catalyzes stereospecifically the conversion of dihydroxyacetone phosphate (DHAP) to D-glyceraldehyde-3-phosphate (G3P). This is Triosephosphate isomerase from Roseiflexus sp. (strain RS-1).